We begin with the raw amino-acid sequence, 334 residues long: Large ribosomal subunit protein uL3 (334 aa).

The span at 1 to 10 shows a compositional bias: basic residues; the sequence is MGMKKSRPRR. Positions 1-20 are disordered; that stretch reads MGMKKSRPRRGSLAFSPRKR.

Belongs to the universal ribosomal protein uL3 family. In terms of assembly, part of the 50S ribosomal subunit. Forms a cluster with proteins L14 and L24e.

In terms of biological role, one of the primary rRNA binding proteins, it binds directly near the 3'-end of the 23S rRNA, where it nucleates assembly of the 50S subunit. This Methanococcus maripaludis (strain C6 / ATCC BAA-1332) protein is Large ribosomal subunit protein uL3.